The primary structure comprises 792 residues: Host cell factor 2 (792 aa).

4 Kelch repeats span residues 34-79, 83-130, 207-255, and 257-303; these read LMII…GFVC, RILV…RLGH, KMYV…VIGN, and MYIF…VSDS. A Fibronectin type-III 1 domain is found at 359 to 449; it reads APSQVQLIKA…QPATKETSMK (91 aa). The interval 399–447 is disordered; sequence ASSDSSAAPNMQGVRMDPHRQGSNNIVPNSINDTINSTKTEQPATKETS. Over residues 419–445 the composition is skewed to polar residues; it reads QGSNNIVPNSINDTINSTKTEQPATKE. A Glycyl lysine isopeptide (Lys-Gly) (interchain with G-Cter in SUMO2) cross-link involves residue Lys-553. Fibronectin type-III domains are found at residues 583-675 and 677-787; these read TPSN…TCIP and FPGA…GNNK.

In terms of assembly, binds KMT2A/MLL1. Component of the MLL1/MLL complex, at least composed of KMT2A/MLL1, ASH2L, RBBP5, DPY30, WDR5, MEN1, HCFC1 and HCFC2. Interacts with TASOR. In terms of tissue distribution, highly expressed in testis. Detected at lower levels in spleen, thymus, prostate, ovary, small intestine and colon.

The protein resides in the cytoplasm. Its subcellular location is the nucleus. This is Host cell factor 2 (HCFC2) from Homo sapiens (Human).